Here is a 148-residue protein sequence, read N- to C-terminus: Small ribosomal subunit protein uS13 (148 aa).

Residues 128 to 148 (RGQRTKSTGRRGSTIGVRKKK) are disordered.

This sequence belongs to the universal ribosomal protein uS13 family. As to quaternary structure, part of the 30S ribosomal subunit. Forms a loose heterodimer with protein S19. Forms two bridges to the 50S subunit in the 70S ribosome.

Functionally, located at the top of the head of the 30S subunit, it contacts several helices of the 16S rRNA. In the 70S ribosome it contacts the 23S rRNA (bridge B1a) and protein L5 of the 50S subunit (bridge B1b), connecting the 2 subunits; these bridges are implicated in subunit movement. This chain is Small ribosomal subunit protein uS13, found in Methanococcoides burtonii (strain DSM 6242 / NBRC 107633 / OCM 468 / ACE-M).